A 360-amino-acid polypeptide reads, in one-letter code: Mannose-1-phosphate guanylyltransferase catalytic subunit beta (360 aa).

The interval 2 to 222 is substrate-binding domain; it reads KALILVGGYG…QGFWMDIGQP (221 aa). Aspartate 110 serves as a coordination point for GDP-alpha-D-mannose. Aspartate 110 contributes to the Mg(2+) binding site. Residue lysine 162 is part of the active site. Residue aspartate 218 participates in GDP-alpha-D-mannose binding. Aspartate 218 is a binding site for Mg(2+). Residues 245-360 are hexapeptide repeat domain; the sequence is HVGPGFIGNV…ESVPEPRIIM (116 aa).

It belongs to the transferase hexapeptide repeat family. Component of the GMPPA-GMPPB mannose-1-phosphate guanylyltransferase complex composed of 4 gmppa subunits and 8 gmppb subunits; the complex is organized into three layers, a central layer made up of 2 gmppa dimers sandwiched between two layers each made up of 2 gmppb dimers. Catalytic activity of gmppb is reduced when part of the complex and binding of GDP-alpha-D-Mannose by gmppa induces allosteric feedback inhibition of gmppb. It depends on Mg(2+) as a cofactor.

It carries out the reaction alpha-D-mannose 1-phosphate + GTP + H(+) = GDP-alpha-D-mannose + diphosphate. The protein operates within nucleotide-sugar biosynthesis; GDP-alpha-D-mannose biosynthesis; GDP-alpha-D-mannose from alpha-D-mannose 1-phosphate (GTP route): step 1/1. Its activity is regulated as follows. Enzyme activity is reduced by incorporation into the GMPPA-GMPPB mannose-1-phosphate guanylyltransferase complex. Allosterically inhibited, when part of the GMPPA-GMPPB complex, by GDP-alpha-D-mannose binding to GMPPA. Catalytic subunit of the GMPPA-GMPPB mannose-1-phosphate guanylyltransferase complex. Catalyzes the formation of GDP-mannose, an essential precursor of glycan moieties of glycoproteins and glycolipids. Can catalyze the reverse reaction in vitro. Together with GMPPA regulates GDP-alpha-D-mannose levels. The sequence is that of Mannose-1-phosphate guanylyltransferase catalytic subunit beta (gmppb) from Xenopus tropicalis (Western clawed frog).